A 375-amino-acid polypeptide reads, in one-letter code: RING-H2 finger protein ATL16 (375 aa).

The segment at 1-20 is disordered; sequence MDLSNRRNPLRDLSFPPPPP. The helical transmembrane segment at 39–59 threads the bilayer; the sequence is VAVIGILATAFLLVSYYVFVI. The RING-type; atypical zinc-finger motif lies at 138–180; the sequence is CSVCLSEFQDEEKLRIIPNCSHLFHIDCIDVWLQNNANCPLCR. 2 disordered regions span residues 223-266 and 356-375; these read GSDR…DRGG and SFGS…YFEP. Residues 238–257 are compositionally biased toward polar residues; it reads QERSNSGYLLNENTQNSISP.

It belongs to the RING-type zinc finger family. ATL subfamily.

It localises to the membrane. It catalyses the reaction S-ubiquitinyl-[E2 ubiquitin-conjugating enzyme]-L-cysteine + [acceptor protein]-L-lysine = [E2 ubiquitin-conjugating enzyme]-L-cysteine + N(6)-ubiquitinyl-[acceptor protein]-L-lysine.. It participates in protein modification; protein ubiquitination. The sequence is that of RING-H2 finger protein ATL16 (ATL16) from Arabidopsis thaliana (Mouse-ear cress).